Consider the following 149-residue polypeptide: Large ribosomal subunit protein uL22 (149 aa).

It belongs to the universal ribosomal protein uL22 family. In terms of assembly, part of the 50S ribosomal subunit.

This protein binds specifically to 23S rRNA. It makes multiple contacts with different domains of the 23S rRNA in the assembled 50S subunit and ribosome. In terms of biological role, the globular domain of the protein is located near the polypeptide exit tunnel on the outside of the subunit, while an extended beta-hairpin is found that lines the wall of the exit tunnel in the center of the 70S ribosome. The polypeptide is Large ribosomal subunit protein uL22 (Picrophilus torridus (strain ATCC 700027 / DSM 9790 / JCM 10055 / NBRC 100828 / KAW 2/3)).